A 513-amino-acid chain; its full sequence is HMG box-containing protein 1 (513 aa).

The tract at residues 151–181 (RPPPVSSAKSGPAFPHDHWKEETPVRHERAN) is disordered. Residues 165–181 (PHDHWKEETPVRHERAN) are compositionally biased toward basic and acidic residues. One can recognise an AXH domain in the interval 202–343 (WCNSWPSTVW…PPGHPDAINF (142 aa)). A DNA-binding region (HMG box) is located at residues 433–501 (CKRPMNAFML…EQKRLNPDCW (69 aa)).

In terms of assembly, binds TCF4. Binds RB1. Binds the second PAH repeat of SIN3A. Post-translationally, ubiquitinated by the CTLH E3 ubiquitin-protein ligase complex, leading to subsequent proteasomal degradation. As to expression, highly expressed in liver, adipose tissue, lung, brain, spleen, kidney, skeletal muscle and heart.

Its subcellular location is the nucleus. Functionally, transcriptional repressor that binds to the promoter region of target genes. Plays a role in the regulation of the cell cycle and of the Wnt pathway. Binds preferentially to the sequence 5'-TTCATTCATTCA-3'. Binding to the histone H1.0 promoter is enhanced by interaction with RB1. Disrupts the interaction between DNA and TCF4. The sequence is that of HMG box-containing protein 1 (Hbp1) from Rattus norvegicus (Rat).